Reading from the N-terminus, the 428-residue chain is ETS domain-containing protein Elk-1 (428 aa).

A DNA-binding region (ETS) is located at residues 5–86 (VTLWQFLLQL…SGQKFVYKFV (82 aa)). Disordered regions lie at residues 121–149 (AAPG…ARSS), 165–205 (QSLQ…SPLE), and 228–358 (NLKS…SLLP). Positions 177-205 (PAVVLPSAAPAGAAAPPSGSRSTSPSPLE) are enriched in low complexity. Glycyl lysine isopeptide (Lys-Gly) (interchain with G-Cter in SUMO) cross-links involve residues Lys230, Lys249, and Lys254. Residues 248 to 261 (VKVEGPKEELEVAG) are compositionally biased toward basic and acidic residues. Position 324 is a phosphoserine; by MAPK1 (Ser324). Thr336, Thr353, Thr363, and Thr368 each carry phosphothreonine; by MAPK1. The segment at 349-399 (GPALTPSLLPTHTLTPVLLTPSSLPPSIHFWSTLSPIAPRSPAKLSFQFPS) is sufficient for interaction with MAD2L2. Thr381 carries O-linked (GlcNAc) threonine glycosylation. A Phosphoserine; by MAPK1 and MAPK8 modification is found at Ser383. A Phosphoserine; by MAPK1 modification is found at Ser389. Thr417 carries the phosphothreonine; by MAPK1 modification. A Phosphoserine; by MAPK1 modification is found at Ser422.

This sequence belongs to the ETS family. As to quaternary structure, interacts in its sumoylated form with PIAS2/PIASX which enhances its transcriptional activator activity. Interacts with MAD2L2; the interaction is direct and promotes phosphorylation by the kinases MAPK8 and/or MAPK9. Interacts with POU1F1. In terms of processing, sumoylation represses transcriptional activator activity as it results in recruitment of HDAC2 to target gene promoters which leads to decreased histone acetylation and reduced transactivator activity. It also regulates nuclear retention. Post-translationally, on mitogenic stimulation, phosphorylated on C-terminal serine and threonine residues by MAPK1. Ser-383 and Ser-389 are the preferred sites for MAPK1. In vitro, phosphorylation by MAPK1 potentiates ternary complex formation with the serum responses factors, SRE and SRF. Also phosphorylated on Ser-383 by MAPK8 and/or MAKP9. Phosphorylation leads to loss of sumoylation and restores transcriptional activator activity. Phosphorylated and activated by CAMK4, MAPK11, MAPK12 and MAPK14. Upon bFGF stimulus, phosphorylated by PAK1. Phosphorylated by PRP4K at Thr-417; phosphorylation activation ELK1 transcriptional activity. Lung and testis.

The protein resides in the nucleus. Transcription factor that binds to purine-rich DNA sequences. Forms a ternary complex with SRF and the ETS and SRF motifs of the serum response element (SRE) on the promoter region of immediate early genes such as FOS and IER2. Induces target gene transcription upon JNK and MAPK-signaling pathways stimulation. The sequence is that of ETS domain-containing protein Elk-1 from Homo sapiens (Human).